The chain runs to 427 residues: Serine--tRNA ligase (427 aa).

L-serine is bound at residue 236–238 (TAE). 267–269 (RRE) contacts ATP. Glutamate 290 is a binding site for L-serine. Residue 354–357 (EISS) participates in ATP binding. Residue serine 390 coordinates L-serine.

It belongs to the class-II aminoacyl-tRNA synthetase family. Type-1 seryl-tRNA synthetase subfamily. As to quaternary structure, homodimer. The tRNA molecule binds across the dimer.

It is found in the cytoplasm. The enzyme catalyses tRNA(Ser) + L-serine + ATP = L-seryl-tRNA(Ser) + AMP + diphosphate + H(+). It carries out the reaction tRNA(Sec) + L-serine + ATP = L-seryl-tRNA(Sec) + AMP + diphosphate + H(+). The protein operates within aminoacyl-tRNA biosynthesis; selenocysteinyl-tRNA(Sec) biosynthesis; L-seryl-tRNA(Sec) from L-serine and tRNA(Sec): step 1/1. In terms of biological role, catalyzes the attachment of serine to tRNA(Ser). Is also able to aminoacylate tRNA(Sec) with serine, to form the misacylated tRNA L-seryl-tRNA(Sec), which will be further converted into selenocysteinyl-tRNA(Sec). The protein is Serine--tRNA ligase of Picosynechococcus sp. (strain ATCC 27264 / PCC 7002 / PR-6) (Agmenellum quadruplicatum).